A 95-amino-acid polypeptide reads, in one-letter code: Mitochondrial import inner membrane translocase subunit Tim9 (95 aa).

The short motif at Cys35–Cys59 is the Twin CX3C motif element. Cystine bridges form between Cys35/Cys59 and Cys39/Cys55.

Belongs to the small Tim family. As to quaternary structure, heterohexamer; composed of 3 copies of Tim9 and 3 copies of Tim10, named soluble 70 kDa complex. The complex associates with the Tim22 component of the TIM22 complex. Interacts with multi-pass transmembrane proteins in transit.

It localises to the mitochondrion inner membrane. Functionally, mitochondrial intermembrane chaperone that participates in the import and insertion of multi-pass transmembrane proteins into the mitochondrial inner membrane. May also be required for the transfer of beta-barrel precursors from the TOM complex to the sorting and assembly machinery (SAM complex) of the outer membrane. Acts as a chaperone-like protein that protects the hydrophobic precursors from aggregation and guide them through the mitochondrial intermembrane space. This chain is Mitochondrial import inner membrane translocase subunit Tim9 (Tim9a), found in Drosophila melanogaster (Fruit fly).